Consider the following 126-residue polypeptide: MADLQQLEDQIVSLSLLDAAALVKKLEERLGVSAAAAAPVVVAGGAAGAGAAEAAAEQTEFTVILKDAGANKINTIKAVREVTALGLKEAKDLVDGAPKPLKENISKEDAEAIKKKFDGVATIEIK.

Belongs to the bacterial ribosomal protein bL12 family. Homodimer. Part of the ribosomal stalk of the 50S ribosomal subunit. Forms a multimeric L10(L12)X complex, where L10 forms an elongated spine to which 2 to 4 L12 dimers bind in a sequential fashion. Binds GTP-bound translation factors.

Forms part of the ribosomal stalk which helps the ribosome interact with GTP-bound translation factors. Is thus essential for accurate translation. This Acidobacterium capsulatum (strain ATCC 51196 / DSM 11244 / BCRC 80197 / JCM 7670 / NBRC 15755 / NCIMB 13165 / 161) protein is Large ribosomal subunit protein bL12.